We begin with the raw amino-acid sequence, 312 residues long: Olfactory receptor 1D2 (312 aa).

At 1-25 (MDGGNQSEGSEFLLLGMSESPEQQR) the chain is on the extracellular side. Asparagine 5 carries an N-linked (GlcNAc...) asparagine glycan. A helical membrane pass occupies residues 26–49 (ILFWMFLSMYLVTVVGNVLIILAI). At 50 to 57 (SSDSRLHT) the chain is on the cytoplasmic side. Residues 58–79 (PVYFFLANLSFTDLFFVTNTIP) traverse the membrane as a helical segment. Residues 80–100 (KMLVNLQSHNKAISYAGCLTQ) lie on the Extracellular side of the membrane. Cysteine 97 and cysteine 189 are oxidised to a cystine. A helical membrane pass occupies residues 101 to 120 (LYFLVSLVALDNLILAVMAY). Residues 121 to 139 (DRYVAICCPLHYTTAMSPK) lie on the Cytoplasmic side of the membrane. The chain crosses the membrane as a helical span at residues 140-158 (LCILLLSLCWVLSVLYGLI). Over 159 to 196 (HTLLMTRVTFCGSRKIHYIFCEMYVLLRMACSNIQINH) the chain is Extracellular. Residue asparagine 195 is glycosylated (N-linked (GlcNAc...) asparagine). Residues 197 to 219 (TVLIATGCFIFLIPFGFVIISYV) form a helical membrane-spanning segment. Residues 220–236 (LIIRAILRIPSVSKKYK) lie on the Cytoplasmic side of the membrane. Residues 237–259 (AFSTCASHLGAVSLFYGTLCMVY) form a helical membrane-spanning segment. Topologically, residues 260-271 (LKPLHTYSVKDS) are extracellular. Residues 272–291 (VATVMYAVVTPMMNPFIYSL) form a helical membrane-spanning segment. Residues 292 to 312 (RNKDMHGALGRLLDKHFKRLT) are Cytoplasmic-facing.

It belongs to the G-protein coupled receptor 1 family. In terms of tissue distribution, expressed in testis. Expressed in spermatozoa (at protein level). Expressed in olfactory epithelium.

It is found in the cell membrane. Its function is as follows. Odorant receptor which may be involved in sperm chemotaxis. Bourgeonal is a strong chemoattractant for sperm in vitro and is shown to be a strong agonist for OR1D2 in vitro. May also function in olfactory reception. The chain is Olfactory receptor 1D2 (OR1D2) from Homo sapiens (Human).